A 96-amino-acid chain; its full sequence is Methanol dehydrogenase [cytochrome c] subunit 2 (96 aa).

The N-terminal stretch at Met1–Ala22 is a signal peptide. The cysteines at positions 28 and 34 are disulfide-linked. A disordered region spans residues Ile45–Lys75. Positions Tyr50 to Lys61 are enriched in basic and acidic residues.

Belongs to the methanol dehydrogenase subunit 2 family. In terms of assembly, heterotetramer composed of 2 alpha and 2 beta subunits.

It is found in the periplasm. The enzyme catalyses 2 Fe(III)-[cytochrome cL] + a primary alcohol = 2 Fe(II)-[cytochrome cL] + an aldehyde + 2 H(+). Catalyzes the oxidation of primary alcohols including methanol. This is Methanol dehydrogenase [cytochrome c] subunit 2 (moxI) from Methylorubrum extorquens (strain ATCC 14718 / DSM 1338 / JCM 2805 / NCIMB 9133 / AM1) (Methylobacterium extorquens).